Reading from the N-terminus, the 62-residue chain is Large ribosomal subunit protein bL28 (62 aa).

This sequence belongs to the bacterial ribosomal protein bL28 family.

The polypeptide is Large ribosomal subunit protein bL28 (Phytoplasma mali (strain AT)).